Consider the following 174-residue polypeptide: Gamma-crystallin D (174 aa).

2 Beta/gamma crystallin 'Greek key' domains span residues 2 to 40 (GKIT…RVDS) and 41 to 83 (GCWM…RLIP). Residues 84–87 (HAGS) are connecting peptide. 2 Beta/gamma crystallin 'Greek key' domains span residues 88–128 (HRIR…NVLE) and 129–171 (GCWV…RRVM).

This sequence belongs to the beta/gamma-crystallin family. In terms of tissue distribution, detected in the superior olivary complex and fibers of the ventral aoustic stria of the auditory hindbrain.

Its function is as follows. Crystallins are the dominant structural components of the vertebrate eye lens. This Rattus norvegicus (Rat) protein is Gamma-crystallin D (Crygd).